Reading from the N-terminus, the 166-residue chain is Small ribosomal subunit protein uS5 (166 aa).

Residues 11-74 (LIEKLVSVKR…ENAKKNMVSV (64 aa)) enclose the S5 DRBM domain.

The protein belongs to the universal ribosomal protein uS5 family. As to quaternary structure, part of the 30S ribosomal subunit. Contacts proteins S4 and S8.

With S4 and S12 plays an important role in translational accuracy. Its function is as follows. Located at the back of the 30S subunit body where it stabilizes the conformation of the head with respect to the body. The protein is Small ribosomal subunit protein uS5 of Francisella tularensis subsp. holarctica (strain LVS).